The primary structure comprises 220 residues: Deoxyribose-phosphate aldolase 2 (220 aa).

Asp-89 acts as the Proton donor/acceptor in catalysis. The Schiff-base intermediate with acetaldehyde role is filled by Lys-151. The Proton donor/acceptor role is filled by Lys-180.

Belongs to the DeoC/FbaB aldolase family. DeoC type 1 subfamily.

It is found in the cytoplasm. It carries out the reaction 2-deoxy-D-ribose 5-phosphate = D-glyceraldehyde 3-phosphate + acetaldehyde. Its pathway is carbohydrate degradation; 2-deoxy-D-ribose 1-phosphate degradation; D-glyceraldehyde 3-phosphate and acetaldehyde from 2-deoxy-alpha-D-ribose 1-phosphate: step 2/2. Functionally, catalyzes a reversible aldol reaction between acetaldehyde and D-glyceraldehyde 3-phosphate to generate 2-deoxy-D-ribose 5-phosphate. In Staphylococcus aureus (strain MSSA476), this protein is Deoxyribose-phosphate aldolase 2.